Consider the following 469-residue polypeptide: Ribulose bisphosphate carboxylase large chain (469 aa).

N6,N6,N6-trimethyllysine is present on Lys-5. The substrate site is built by Asn-114 and Thr-164. Lys-166 serves as the catalytic Proton acceptor. Position 168 (Lys-168) interacts with substrate. Mg(2+)-binding residues include Lys-192, Asp-194, and Glu-195. Lys-192 carries the post-translational modification N6-carboxylysine. His-285 functions as the Proton acceptor in the catalytic mechanism. Positions 286, 318, and 370 each coordinate substrate.

Belongs to the RuBisCO large chain family. Type I subfamily. As to quaternary structure, heterohexadecamer of 8 large chains and 8 small chains; disulfide-linked. The disulfide link is formed within the large subunit homodimers. The cofactor is Mg(2+). Post-translationally, the disulfide bond which can form in the large chain dimeric partners within the hexadecamer appears to be associated with oxidative stress and protein turnover.

It localises to the plastid. It is found in the chloroplast. It catalyses the reaction 2 (2R)-3-phosphoglycerate + 2 H(+) = D-ribulose 1,5-bisphosphate + CO2 + H2O. It carries out the reaction D-ribulose 1,5-bisphosphate + O2 = 2-phosphoglycolate + (2R)-3-phosphoglycerate + 2 H(+). In terms of biological role, ruBisCO catalyzes two reactions: the carboxylation of D-ribulose 1,5-bisphosphate, the primary event in carbon dioxide fixation, as well as the oxidative fragmentation of the pentose substrate in the photorespiration process. Both reactions occur simultaneously and in competition at the same active site. The polypeptide is Ribulose bisphosphate carboxylase large chain (Fleroya rubrostipulata (Mitragyna rubrostipulata)).